A 338-amino-acid polypeptide reads, in one-letter code: Ketol-acid reductoisomerase (NADP(+)) (338 aa).

One can recognise a KARI N-terminal Rossmann domain in the interval 1-181 (MQIYYDKDAD…GGGRAGIIET (181 aa)). Residues 24-27 (YGSQ), arginine 47, serine 50, serine 52, and 82-85 (DEHQ) each bind NADP(+). The active site involves histidine 107. Glycine 133 provides a ligand contact to NADP(+). Residues 182 to 327 (TFREETETDL…ARLRDMMPWI (146 aa)) form the KARI C-terminal knotted domain. 4 residues coordinate Mg(2+): aspartate 190, glutamate 194, glutamate 226, and glutamate 230. Residue serine 251 coordinates substrate.

This sequence belongs to the ketol-acid reductoisomerase family. Mg(2+) serves as cofactor.

The enzyme catalyses (2R)-2,3-dihydroxy-3-methylbutanoate + NADP(+) = (2S)-2-acetolactate + NADPH + H(+). The catalysed reaction is (2R,3R)-2,3-dihydroxy-3-methylpentanoate + NADP(+) = (S)-2-ethyl-2-hydroxy-3-oxobutanoate + NADPH + H(+). It participates in amino-acid biosynthesis; L-isoleucine biosynthesis; L-isoleucine from 2-oxobutanoate: step 2/4. The protein operates within amino-acid biosynthesis; L-valine biosynthesis; L-valine from pyruvate: step 2/4. Its function is as follows. Involved in the biosynthesis of branched-chain amino acids (BCAA). Catalyzes an alkyl-migration followed by a ketol-acid reduction of (S)-2-acetolactate (S2AL) to yield (R)-2,3-dihydroxy-isovalerate. In the isomerase reaction, S2AL is rearranged via a Mg-dependent methyl migration to produce 3-hydroxy-3-methyl-2-ketobutyrate (HMKB). In the reductase reaction, this 2-ketoacid undergoes a metal-dependent reduction by NADPH to yield (R)-2,3-dihydroxy-isovalerate. This Methylococcus capsulatus (strain ATCC 33009 / NCIMB 11132 / Bath) protein is Ketol-acid reductoisomerase (NADP(+)).